Consider the following 95-residue polypeptide: Integration host factor subunit beta (95 aa).

Residues 56-76 (RAPRTGRNPKTGSSVDLEGKY) are disordered.

The protein belongs to the bacterial histone-like protein family. As to quaternary structure, heterodimer of an alpha and a beta chain.

In terms of biological role, this protein is one of the two subunits of integration host factor, a specific DNA-binding protein that functions in genetic recombination as well as in transcriptional and translational control. The polypeptide is Integration host factor subunit beta (Shewanella baltica (strain OS223)).